An 84-amino-acid polypeptide reads, in one-letter code: Large ribosomal subunit protein bL27 (84 aa).

Positions 1 to 22 (MAHKKGASSTRNGRDSNAQRLG) are disordered. Over residues 7–19 (ASSTRNGRDSNAQ) the composition is skewed to polar residues.

The protein belongs to the bacterial ribosomal protein bL27 family.

This Streptomyces avermitilis (strain ATCC 31267 / DSM 46492 / JCM 5070 / NBRC 14893 / NCIMB 12804 / NRRL 8165 / MA-4680) protein is Large ribosomal subunit protein bL27.